Consider the following 352-residue polypeptide: Phosphoribosylformylglycinamidine cyclo-ligase (352 aa).

It belongs to the AIR synthase family.

It is found in the cytoplasm. The catalysed reaction is 2-formamido-N(1)-(5-O-phospho-beta-D-ribosyl)acetamidine + ATP = 5-amino-1-(5-phospho-beta-D-ribosyl)imidazole + ADP + phosphate + H(+). It participates in purine metabolism; IMP biosynthesis via de novo pathway; 5-amino-1-(5-phospho-D-ribosyl)imidazole from N(2)-formyl-N(1)-(5-phospho-D-ribosyl)glycinamide: step 2/2. This chain is Phosphoribosylformylglycinamidine cyclo-ligase, found in Azoarcus sp. (strain BH72).